The sequence spans 77 residues: Large ribosomal subunit protein uL24 (77 aa).

Residues Lys42–Gly61 form a disordered region.

It belongs to the universal ribosomal protein uL24 family. Part of the 50S ribosomal subunit.

In terms of biological role, one of two assembly initiator proteins, it binds directly to the 5'-end of the 23S rRNA, where it nucleates assembly of the 50S subunit. One of the proteins that surrounds the polypeptide exit tunnel on the outside of the subunit. The polypeptide is Large ribosomal subunit protein uL24 (Lactobacillus acidophilus (strain ATCC 700396 / NCK56 / N2 / NCFM)).